The following is a 303-amino-acid chain: MLSVIKQRDKEVLAHLPNKRKIAGNKAHLETYKKLAKYTVSASIFKFLSISHPCPLRAKTRLFFEVSLGNRIADCVMLTSCGETRICYVIELKTCMTSNLDLISDIRKSQRSQGLCQLADTVNFIHNYAPLGRQAWTVLPILIFKSQKTLKTLHIETPKFPVNLTHTSEEKLSCFLWSRADVEIRKKIHLAPKPKRIFKWDSLLDSTSTEHSAYRQKLIERNKKKCFTLQNQTSKFRDRTNKKSNDQLRARQANARPCKKKQHNNKRLRNNRKHGGKVSRLTTTTSFSSEAAFSNYPVSTHKL.

Basic and acidic residues predominate over residues 235 to 249; that stretch reads KFRDRTNKKSNDQLR. The disordered stretch occupies residues 235 to 280; sequence KFRDRTNKKSNDQLRARQANARPCKKKQHNNKRLRNNRKHGGKVSR. Residues 257 to 277 are compositionally biased toward basic residues; it reads PCKKKQHNNKRLRNNRKHGGK.

It belongs to the herpesviridae UL24 family.

It is found in the virion. The protein resides in the host cytoplasm. It localises to the host nucleus. The protein localises to the host nucleolus. Its subcellular location is the host Golgi apparatus. Functionally, may participate in nuclear egress of viral particles. Plays a role in the dispersal of several host nucleolar proteins including NCL/nucleolin and NPM1. Since deletion of host NCL/nucleolin negatively impact on nuclear egress, UL24 supposedly acts on this process through its effect on host nucleoli. In Saimiri sciureus (Common squirrel monkey), this protein is Protein UL24 homolog (20).